The following is a 223-amino-acid chain: 7-cyano-7-deazaguanine synthase (223 aa).

8-18 is a binding site for ATP; sequence LSGGLDSATTL. Positions 187, 197, 200, and 203 each coordinate Zn(2+).

The protein belongs to the QueC family. Requires Zn(2+) as cofactor.

The catalysed reaction is 7-carboxy-7-deazaguanine + NH4(+) + ATP = 7-cyano-7-deazaguanine + ADP + phosphate + H2O + H(+). It functions in the pathway purine metabolism; 7-cyano-7-deazaguanine biosynthesis. Its function is as follows. Catalyzes the ATP-dependent conversion of 7-carboxy-7-deazaguanine (CDG) to 7-cyano-7-deazaguanine (preQ(0)). The chain is 7-cyano-7-deazaguanine synthase from Methylococcus capsulatus (strain ATCC 33009 / NCIMB 11132 / Bath).